Reading from the N-terminus, the 598-residue chain is Rho-related protein racA (598 aa).

11–17 (DGAVGKS) lines the GTP pocket. An Effector region motif is present at residues 32-40 (YVPTVFDNY). Residues 57-61 (DTAGQ) and 115-118 (TKND) each bind GTP. A disordered region spans residues 175 to 210 (ASAKKKGGFFSSSSSSSSSSSSKSSEKSVPIPPVMP). The span at 182–197 (GFFSSSSSSSSSSSSK) shows a compositional bias: low complexity. BTB domains lie at 239–344 (SDVK…NYLD) and 405–472 (SDIQ…PIEE).

It in the N-terminal section; belongs to the small GTPase superfamily. Rho family. As to quaternary structure, interacts with pakB.

In Dictyostelium discoideum (Social amoeba), this protein is Rho-related protein racA (racA).